The chain runs to 332 residues: Phospho-N-acetylmuramoyl-pentapeptide-transferase (332 aa).

A run of 8 helical transmembrane segments spans residues Ile9 to Phe29, Thr55 to Ile75, Leu79 to Ile99, Met115 to Met135, Ile155 to Ala175, Ile196 to Phe216, Ala253 to Ala273, and Val312 to Asn332.

It belongs to the glycosyltransferase 4 family. MraY subfamily. The cofactor is Mg(2+).

The protein resides in the cell membrane. It carries out the reaction UDP-N-acetyl-alpha-D-muramoyl-L-alanyl-gamma-D-glutamyl-meso-2,6-diaminopimeloyl-D-alanyl-D-alanine + di-trans,octa-cis-undecaprenyl phosphate = di-trans,octa-cis-undecaprenyl diphospho-N-acetyl-alpha-D-muramoyl-L-alanyl-D-glutamyl-meso-2,6-diaminopimeloyl-D-alanyl-D-alanine + UMP. It functions in the pathway cell wall biogenesis; peptidoglycan biosynthesis. Catalyzes the initial step of the lipid cycle reactions in the biosynthesis of the cell wall peptidoglycan: transfers peptidoglycan precursor phospho-MurNAc-pentapeptide from UDP-MurNAc-pentapeptide onto the lipid carrier undecaprenyl phosphate, yielding undecaprenyl-pyrophosphoryl-MurNAc-pentapeptide, known as lipid I. The protein is Phospho-N-acetylmuramoyl-pentapeptide-transferase of Alkaliphilus oremlandii (strain OhILAs) (Clostridium oremlandii (strain OhILAs)).